The following is a 352-amino-acid chain: tRNA-specific 2-thiouridylase MnmA (352 aa).

ATP contacts are provided by residues 7–14 (GLSGGVDS) and Leu33. Cys94 (nucleophile) is an active-site residue. A disulfide bridge connects residues Cys94 and Cys193. Gly119 provides a ligand contact to ATP. Residues 143–145 (KDQ) form an interaction with tRNA region. The active-site Cysteine persulfide intermediate is the Cys193. Residues 298-299 (RY) are interaction with tRNA.

This sequence belongs to the MnmA/TRMU family.

The protein localises to the cytoplasm. It catalyses the reaction S-sulfanyl-L-cysteinyl-[protein] + uridine(34) in tRNA + AH2 + ATP = 2-thiouridine(34) in tRNA + L-cysteinyl-[protein] + A + AMP + diphosphate + H(+). Catalyzes the 2-thiolation of uridine at the wobble position (U34) of tRNA, leading to the formation of s(2)U34. This Microcystis aeruginosa (strain NIES-843 / IAM M-2473) protein is tRNA-specific 2-thiouridylase MnmA.